The following is a 220-amino-acid chain: Charged multivesicular body protein 2a (220 aa).

At Met-1 the chain carries N-acetylmethionine. 2 coiled-coil regions span residues 12-52 (EELL…KMAK) and 195-220 (RAAE…LRRD). Residues 208-218 (ADLEERLKNLR) carry the MIT-interacting motif motif.

Belongs to the SNF7 family. In terms of assembly, probable core component of the endosomal sorting required for transport complex III (ESCRT-III). ESCRT-III components are thought to multimerize to form a flat lattice on the perimeter membrane of the endosome.

It localises to the late endosome membrane. It is found in the cytoplasm. Its function is as follows. Probable core component of the endosomal sorting required for transport complex III (ESCRT-III) which is involved in multivesicular bodies (MVBs) formation and sorting of endosomal cargo proteins into MVBs. MVBs contain intraluminal vesicles (ILVs) that are generated by invagination and scission from the limiting membrane of the endosome and mostly are delivered to lysosomes enabling degradation of membrane proteins, such as stimulated growth factor receptors, lysosomal enzymes and lipids. The chain is Charged multivesicular body protein 2a (CHMP2A) from Gallus gallus (Chicken).